A 297-amino-acid polypeptide reads, in one-letter code: Tyrosine recombinase XerC (297 aa).

The Core-binding (CB) domain maps to Met1 to Met84. The Tyr recombinase domain occupies Tyr105–Leu286. Catalysis depends on residues Arg145, Lys169, His238, Arg241, and His264. The O-(3'-phospho-DNA)-tyrosine intermediate role is filled by Tyr273.

Belongs to the 'phage' integrase family. XerC subfamily. Forms a cyclic heterotetrameric complex composed of two molecules of XerC and two molecules of XerD.

The protein localises to the cytoplasm. In terms of biological role, site-specific tyrosine recombinase, which acts by catalyzing the cutting and rejoining of the recombining DNA molecules. The XerC-XerD complex is essential to convert dimers of the bacterial chromosome into monomers to permit their segregation at cell division. It also contributes to the segregational stability of plasmids. This Staphylococcus haemolyticus (strain JCSC1435) protein is Tyrosine recombinase XerC.